Consider the following 123-residue polypeptide: Small ribosomal subunit protein uS12 (123 aa).

Asp89 bears the 3-methylthioaspartic acid mark.

This sequence belongs to the universal ribosomal protein uS12 family. As to quaternary structure, part of the 30S ribosomal subunit. Contacts proteins S8 and S17. May interact with IF1 in the 30S initiation complex.

In terms of biological role, with S4 and S5 plays an important role in translational accuracy. Interacts with and stabilizes bases of the 16S rRNA that are involved in tRNA selection in the A site and with the mRNA backbone. Located at the interface of the 30S and 50S subunits, it traverses the body of the 30S subunit contacting proteins on the other side and probably holding the rRNA structure together. The combined cluster of proteins S8, S12 and S17 appears to hold together the shoulder and platform of the 30S subunit. The protein is Small ribosomal subunit protein uS12 of Acidiphilium cryptum (strain JF-5).